Here is a 254-residue protein sequence, read N- to C-terminus: 3-dehydroquinate dehydratase (254 aa).

3-dehydroquinate-binding positions include 47–49 (EWR) and Arg83. The active-site Proton donor/acceptor is the His144. Catalysis depends on Lys171, which acts as the Schiff-base intermediate with substrate. 3-dehydroquinate contacts are provided by Arg214, Ser233, and Gln237.

Belongs to the type-I 3-dehydroquinase family. In terms of assembly, homodimer.

The enzyme catalyses 3-dehydroquinate = 3-dehydroshikimate + H2O. It participates in metabolic intermediate biosynthesis; chorismate biosynthesis; chorismate from D-erythrose 4-phosphate and phosphoenolpyruvate: step 3/7. Functionally, involved in the third step of the chorismate pathway, which leads to the biosynthesis of aromatic amino acids. Catalyzes the cis-dehydration of 3-dehydroquinate (DHQ) and introduces the first double bond of the aromatic ring to yield 3-dehydroshikimate. This is 3-dehydroquinate dehydratase from Clostridium botulinum (strain Eklund 17B / Type B).